Here is a 602-residue protein sequence, read N- to C-terminus: Cholinesterase (602 aa).

Residues 1 to 28 (MHSKVTIICIRFLFWFLLLCMLIGKSHT) form the signal peptide. N-linked (GlcNAc...) (complex) asparagine glycosylation is found at Asn-45 and Asn-85. An intrachain disulfide couples Cys-93 to Cys-120. Trp-110 provides a ligand contact to tacrine. The N-linked (GlcNAc...) (complex) asparagine glycan is linked to Asn-134. Residue 144–145 (GG) coordinates substrate. The Acyl-ester intermediate role is filled by Ser-226. Phosphoserine is present on Ser-226. N-linked (GlcNAc...) (complex) asparagine glycosylation is found at Asn-269 and Asn-284. A disulfide bridge links Cys-280 with Cys-291. The Charge relay system role is filled by Glu-353. The N-linked (GlcNAc...) (complex) asparagine glycan is linked to Asn-369. A disulfide bond links Cys-428 and Cys-547. Residue His-466 participates in tacrine binding. His-466 acts as the Charge relay system in catalysis. Asn-483 carries N-linked (GlcNAc...) (complex) asparagine glycosylation. 3 N-linked (GlcNAc...) asparagine glycosylation sites follow: Asn-509, Asn-513, and Asn-514.

It belongs to the type-B carboxylesterase/lipase family. In terms of assembly, homotetramer; disulfide-linked. Dimer of dimers. In terms of processing, N-glycosylated. No other PTM detected. The major N-glycan structures are of the complex diantennary type with 1 and 2 N-acetylneuraminic acid molecules (Neu5Ac) making up approximately 33% and 47% of the total N-glycans, respectively. Only low amounts of fucosylated diantennary N-glycans are detected (approximately 2%). Triantennary N-glycans with or without fucose amount to approximately 13%, whereas 5% of the total N-glycans are of the oligomannosidic or hybrid type. As to expression, detected in blood plasma (at protein level). Present in most cells except erythrocytes.

It is found in the secreted. The catalysed reaction is an acylcholine + H2O = a carboxylate + choline + H(+). Its activity is regulated as follows. Inhibited by mercury. Inhibited by Tabun. Tabun forms a covalent adduct with Ser-226 that becomes irreversible upon aging. Functionally, esterase with broad substrate specificity. Contributes to the inactivation of the neurotransmitter acetylcholine. Can degrade neurotoxic organophosphate esters. The chain is Cholinesterase (BCHE) from Homo sapiens (Human).